The primary structure comprises 334 residues: Holliday junction branch migration complex subunit RuvB (334 aa).

Positions 4–184 (ADRIISPNAT…FGIVQRLEFY (181 aa)) are large ATPase domain (RuvB-L). Residues Ile23, Arg24, Gly65, Lys68, Thr69, Thr70, 131 to 133 (EDY), Arg174, Tyr184, and Arg221 contribute to the ATP site. Thr69 contributes to the Mg(2+) binding site. A small ATPAse domain (RuvB-S) region spans residues 185–255 (SVEDLRHIVA…VADKALNMLN (71 aa)). Residues 258–334 (LHGFDHMDRR…YNHFGLTMPE (77 aa)) are head domain (RuvB-H). DNA-binding residues include Arg313 and Arg318.

The protein belongs to the RuvB family. In terms of assembly, homohexamer. Forms an RuvA(8)-RuvB(12)-Holliday junction (HJ) complex. HJ DNA is sandwiched between 2 RuvA tetramers; dsDNA enters through RuvA and exits via RuvB. An RuvB hexamer assembles on each DNA strand where it exits the tetramer. Each RuvB hexamer is contacted by two RuvA subunits (via domain III) on 2 adjacent RuvB subunits; this complex drives branch migration. In the full resolvosome a probable DNA-RuvA(4)-RuvB(12)-RuvC(2) complex forms which resolves the HJ.

The protein localises to the cytoplasm. The enzyme catalyses ATP + H2O = ADP + phosphate + H(+). The RuvA-RuvB-RuvC complex processes Holliday junction (HJ) DNA during genetic recombination and DNA repair, while the RuvA-RuvB complex plays an important role in the rescue of blocked DNA replication forks via replication fork reversal (RFR). RuvA specifically binds to HJ cruciform DNA, conferring on it an open structure. The RuvB hexamer acts as an ATP-dependent pump, pulling dsDNA into and through the RuvAB complex. RuvB forms 2 homohexamers on either side of HJ DNA bound by 1 or 2 RuvA tetramers; 4 subunits per hexamer contact DNA at a time. Coordinated motions by a converter formed by DNA-disengaged RuvB subunits stimulates ATP hydrolysis and nucleotide exchange. Immobilization of the converter enables RuvB to convert the ATP-contained energy into a lever motion, pulling 2 nucleotides of DNA out of the RuvA tetramer per ATP hydrolyzed, thus driving DNA branch migration. The RuvB motors rotate together with the DNA substrate, which together with the progressing nucleotide cycle form the mechanistic basis for DNA recombination by continuous HJ branch migration. Branch migration allows RuvC to scan DNA until it finds its consensus sequence, where it cleaves and resolves cruciform DNA. This is Holliday junction branch migration complex subunit RuvB from Hahella chejuensis (strain KCTC 2396).